The primary structure comprises 212 residues: Thiamine-phosphate synthase (212 aa).

4-amino-2-methyl-5-(diphosphooxymethyl)pyrimidine-binding positions include 39–41 (QLR) and Asn71. Mg(2+)-binding residues include Asp72 and Asp91. Ser110 contributes to the 4-amino-2-methyl-5-(diphosphooxymethyl)pyrimidine binding site. 136–138 (TGT) serves as a coordination point for 2-[(2R,5Z)-2-carboxy-4-methylthiazol-5(2H)-ylidene]ethyl phosphate. Residue Lys139 participates in 4-amino-2-methyl-5-(diphosphooxymethyl)pyrimidine binding. Residues Gly167 and 187 to 188 (VS) contribute to the 2-[(2R,5Z)-2-carboxy-4-methylthiazol-5(2H)-ylidene]ethyl phosphate site.

The protein belongs to the thiamine-phosphate synthase family. Mg(2+) is required as a cofactor.

The enzyme catalyses 2-[(2R,5Z)-2-carboxy-4-methylthiazol-5(2H)-ylidene]ethyl phosphate + 4-amino-2-methyl-5-(diphosphooxymethyl)pyrimidine + 2 H(+) = thiamine phosphate + CO2 + diphosphate. The catalysed reaction is 2-(2-carboxy-4-methylthiazol-5-yl)ethyl phosphate + 4-amino-2-methyl-5-(diphosphooxymethyl)pyrimidine + 2 H(+) = thiamine phosphate + CO2 + diphosphate. It catalyses the reaction 4-methyl-5-(2-phosphooxyethyl)-thiazole + 4-amino-2-methyl-5-(diphosphooxymethyl)pyrimidine + H(+) = thiamine phosphate + diphosphate. It functions in the pathway cofactor biosynthesis; thiamine diphosphate biosynthesis; thiamine phosphate from 4-amino-2-methyl-5-diphosphomethylpyrimidine and 4-methyl-5-(2-phosphoethyl)-thiazole: step 1/1. In terms of biological role, condenses 4-methyl-5-(beta-hydroxyethyl)thiazole monophosphate (THZ-P) and 2-methyl-4-amino-5-hydroxymethyl pyrimidine pyrophosphate (HMP-PP) to form thiamine monophosphate (TMP). In Azorhizobium caulinodans (strain ATCC 43989 / DSM 5975 / JCM 20966 / LMG 6465 / NBRC 14845 / NCIMB 13405 / ORS 571), this protein is Thiamine-phosphate synthase.